A 124-amino-acid chain; its full sequence is MSRGNAAAAKGKKKGVSFTIDCSKPVDDKIMEIASLEKFLQERIKVGGKAGALGDSVSITREKSKITVTADGQFSKRYLKYLTKKYLKKHNVRDWLRVIAANKDRNLYELRYFNIAENEAEEED.

This sequence belongs to the eukaryotic ribosomal protein eL22 family.

In Arabidopsis thaliana (Mouse-ear cress), this protein is Large ribosomal subunit protein eL22y (RPL22C).